Here is a 316-residue protein sequence, read N- to C-terminus: Ribosomal RNA small subunit methyltransferase H (316 aa).

S-adenosyl-L-methionine is bound by residues 35–37 (AGH), Asp-55, Phe-84, Asp-105, and Gln-112.

This sequence belongs to the methyltransferase superfamily. RsmH family.

It localises to the cytoplasm. The enzyme catalyses cytidine(1402) in 16S rRNA + S-adenosyl-L-methionine = N(4)-methylcytidine(1402) in 16S rRNA + S-adenosyl-L-homocysteine + H(+). In terms of biological role, specifically methylates the N4 position of cytidine in position 1402 (C1402) of 16S rRNA. This Streptococcus pneumoniae (strain JJA) protein is Ribosomal RNA small subunit methyltransferase H.